Reading from the N-terminus, the 350-residue chain is Heat-inducible transcription repressor HrcA (350 aa).

It belongs to the HrcA family.

Its function is as follows. Negative regulator of class I heat shock genes (grpE-dnaK-dnaJ and groELS operons). Prevents heat-shock induction of these operons. The protein is Heat-inducible transcription repressor HrcA of Xanthomonas oryzae pv. oryzae (strain KACC10331 / KXO85).